The primary structure comprises 352 residues: Blue-sensitive opsin (352 aa).

Topologically, residues 1–42 are extracellular; the sequence is MRGNRLVEFPDDFWIPIPLDTNNVTALSPFLVPQDHLGSPTI. Asparagine 23 carries N-linked (GlcNAc...) asparagine glycosylation. The chain crosses the membrane as a helical span at residues 43–67; it reads FYSMSALMFVLFVAGTAINLLTIAC. Topologically, residues 68–79 are cytoplasmic; it reads TLQYKKLRSHLN. A helical transmembrane segment spans residues 80–105; it reads YILVNMAVANLIVASTGSSTCFVCFA. Topologically, residues 106–119 are extracellular; it reads FKYMVLGPLGCKIE. Cysteine 116 and cysteine 193 are oxidised to a cystine. A helical membrane pass occupies residues 120–139; that stretch reads GFTAALGGMVSLWSLAVIAF. Residues 140 to 158 lie on the Cytoplasmic side of the membrane; the sequence is ERWLVICKPLGNFVFKSEH. A helical transmembrane segment spans residues 159 to 182; the sequence is ALLCCALTWVCGLCASVPPLVGWS. Residues 183-208 lie on the Extracellular side of the membrane; sequence RYIPEGMQCSCGPDWYTTGNKFNNES. N-linked (GlcNAc...) asparagine glycosylation occurs at asparagine 206. A helical transmembrane segment spans residues 209 to 236; that stretch reads FVMFLFCFCFAVPFSIIVFCYSQLLFTL. Over 237-258 the chain is Cytoplasmic; that stretch reads KMAAKAQADSASTQKAEKEVTR. The helical transmembrane segment at 259 to 282 threads the bilayer; it reads MVVVMVVAFLVCYVPYASFALWVI. At 283–290 the chain is on the extracellular side; the sequence is NNRGQTFD. The helical transmembrane segment at 291 to 315 threads the bilayer; the sequence is LRLATIPSCVSKASTVYNPVIYVLL. N6-(retinylidene)lysine is present on lysine 302. Topologically, residues 316 to 352 are cytoplasmic; the sequence is NKQFRLCMKKMLGMSADEDEESSTSQSTTEVSKVGPS. Residues 332 to 352 form a disordered region; sequence DEDEESSTSQSTTEVSKVGPS.

The protein belongs to the G-protein coupled receptor 1 family. Opsin subfamily. Post-translationally, phosphorylated on some or all of the serine and threonine residues present in the C-terminal region. As to expression, the color pigments are found in the cone photoreceptor cells.

Its subcellular location is the membrane. Visual pigments are the light-absorbing molecules that mediate vision. They consist of an apoprotein, opsin, covalently linked to cis-retinal. This is Blue-sensitive opsin from Oryzias latipes (Japanese rice fish).